Here is a 507-residue protein sequence, read N- to C-terminus: Beta-glucosidase 12 (507 aa).

Positions M1–A22 are cleaved as a signal peptide. Q50 is a binding site for a beta-D-glucoside. N-linked (GlcNAc...) asparagine glycosylation occurs at N81. A beta-D-glucoside-binding positions include H154 and N199–E200. Catalysis depends on E200, which acts as the Proton donor. C219 and C227 are oxidised to a cystine. N226 carries N-linked (GlcNAc...) asparagine glycosylation. Y344 is a binding site for a beta-D-glucoside. N358 carries N-linked (GlcNAc...) asparagine glycosylation. Residues E414, W459, E466–W467, and F475 contribute to the a beta-D-glucoside site. The active-site Nucleophile is the E414.

Belongs to the glycosyl hydrolase 1 family.

The enzyme catalyses Hydrolysis of terminal, non-reducing beta-D-glucosyl residues with release of beta-D-glucose.. This is Beta-glucosidase 12 from Arabidopsis thaliana (Mouse-ear cress).